The following is a 95-amino-acid chain: Signal recognition particle 19 kDa protein (95 aa).

The protein belongs to the SRP19 family. Part of the signal recognition particle protein translocation system, which is composed of SRP and FtsY. Archaeal SRP consists of a 7S RNA molecule of 300 nucleotides and two protein subunits: SRP54 and SRP19.

The protein resides in the cytoplasm. Its function is as follows. Involved in targeting and insertion of nascent membrane proteins into the cytoplasmic membrane. Binds directly to 7S RNA and mediates binding of the 54 kDa subunit of the SRP. This is Signal recognition particle 19 kDa protein from Desulfurococcus amylolyticus (strain DSM 18924 / JCM 16383 / VKM B-2413 / 1221n) (Desulfurococcus kamchatkensis).